Consider the following 302-residue polypeptide: MDQIRLTHLRQLEAESIHIIREVAAEFSNPVMLYSIGKDSSVMLHLARKAFYPGTLPFPLLHVDTGWKFREMYEFRDRTAKAYGCELLVHKNPEGVAMGINPFIHGSAKHTDIMKTEGLKQALNKYGFDAAFVGARRDEEKSRAKERIYSFRDRFHRWDPKNQRPELWHNYNGQINKGESIRVFPLSNWTEQDIWQYIWLENIDIVPLYLAAERPVLERDGMLMMIDDNRIDLQPGEVIKKRMVRFRTLGCWPLTGAVESNAQTLPEIIEEMLVSTTSERQGRVIDRDQAGSMELKKRQGYF.

It belongs to the PAPS reductase family. CysD subfamily. As to quaternary structure, heterodimer composed of CysD, the smaller subunit, and CysN.

It carries out the reaction sulfate + ATP + H(+) = adenosine 5'-phosphosulfate + diphosphate. Its pathway is sulfur metabolism; hydrogen sulfide biosynthesis; sulfite from sulfate: step 1/3. In terms of biological role, with CysN forms the ATP sulfurylase (ATPS) that catalyzes the adenylation of sulfate producing adenosine 5'-phosphosulfate (APS) and diphosphate, the first enzymatic step in sulfur assimilation pathway. APS synthesis involves the formation of a high-energy phosphoric-sulfuric acid anhydride bond driven by GTP hydrolysis by CysN coupled to ATP hydrolysis by CysD. The sequence is that of Sulfate adenylyltransferase subunit 2 from Shigella dysenteriae serotype 1 (strain Sd197).